Reading from the N-terminus, the 502-residue chain is Glycogen synthase (502 aa).

Residue Lys-24 participates in ADP-alpha-D-glucose binding.

It belongs to the glycosyltransferase 1 family. Bacterial/plant glycogen synthase subfamily.

It catalyses the reaction [(1-&gt;4)-alpha-D-glucosyl](n) + ADP-alpha-D-glucose = [(1-&gt;4)-alpha-D-glucosyl](n+1) + ADP + H(+). The protein operates within glycan biosynthesis; glycogen biosynthesis. Functionally, synthesizes alpha-1,4-glucan chains using ADP-glucose. This Nitrosomonas eutropha (strain DSM 101675 / C91 / Nm57) protein is Glycogen synthase.